A 589-amino-acid polypeptide reads, in one-letter code: Transmembrane 9 superfamily member 1 (589 aa).

The first 24 residues, 1-24 (MPSSSSAAVLVFLLLVSLLTPTFA), serve as a signal peptide directing secretion. The Lumenal segment spans residues 25–222 (SDSDHKYQAE…YPFFEHQIHW (198 aa)). The chain crosses the membrane as a helical span at residues 223–243 (FSIFNSFMMVIFLTGLVSMIL). Residues 244–293 (MRTLRNDYAKYAREDDDLESLERDVSEESGWKLVHGDVFRPASSLVLLSA) are Cytoplasmic-facing. The chain crosses the membrane as a helical span at residues 294-314 (VVGTGAQLALLVLLVILMAIV). Over 315–321 (GTLYVGR) the chain is Lumenal. The chain crosses the membrane as a helical span at residues 322–342 (GAIVTTFIVCYALTSFVSGYV). The Cytoplasmic portion of the chain corresponds to 343–364 (SGGMYSRSGGKHWIKCMVLTAS). Residues 365–385 (LFPFLCFGIGFLLNTIAIFYG) form a helical membrane-spanning segment. At 386-395 (SLAAIPFGTM) the chain is on the lumenal side. A helical membrane pass occupies residues 396-416 (VVVFVIWGFISFPLALLGTVV). The Cytoplasmic segment spans residues 417-448 (GRNWSGAPNNPCRVKTIPRPIPEKKWYLTPSV). The helical transmembrane segment at 449–469 (VSLMGGLLPFGSIFIEMYFVF) threads the bilayer. Over 470–481 (TSFWNYKVYYVY) the chain is Lumenal. The chain crosses the membrane as a helical span at residues 482–502 (GFMLLVFVILVIVTVCVTIVG). Residues 503–518 (TYFLLNAENYHWQWTS) lie on the Cytoplasmic side of the membrane. A helical membrane pass occupies residues 519-539 (FFSAASTAVYVYLYSIYYYYV). The Lumenal segment spans residues 540–550 (KTKMSGFFQTS). The helical transmembrane segment at 551-571 (FYFGYTMMFCLGLGILCGAVG) threads the bilayer. Residues 572-589 (YLGSNLFVRRIYRNIKCD) are Cytoplasmic-facing. Positions 578-583 (FVRRIY) match the Endoplasmic reticulum export signal motif. Positions 587–589 (KCD) match the Golgi retention signal motif.

It belongs to the nonaspanin (TM9SF) (TC 9.A.2) family. As to expression, ubiquitous.

The protein resides in the endosome membrane. It localises to the golgi apparatus membrane. The sequence is that of Transmembrane 9 superfamily member 1 from Arabidopsis thaliana (Mouse-ear cress).